We begin with the raw amino-acid sequence, 292 residues long: Porphobilinogen deaminase (292 aa).

Residue Cys236 is modified to S-(dipyrrolylmethanemethyl)cysteine.

It belongs to the HMBS family. In terms of assembly, monomer. It depends on dipyrromethane as a cofactor.

The enzyme catalyses 4 porphobilinogen + H2O = hydroxymethylbilane + 4 NH4(+). It functions in the pathway porphyrin-containing compound metabolism; protoporphyrin-IX biosynthesis; coproporphyrinogen-III from 5-aminolevulinate: step 2/4. In terms of biological role, tetrapolymerization of the monopyrrole PBG into the hydroxymethylbilane pre-uroporphyrinogen in several discrete steps. The protein is Porphobilinogen deaminase of Wolbachia sp. subsp. Drosophila simulans (strain wRi).